The primary structure comprises 146 residues: Small ribosomal subunit protein uS5 (146 aa).

Positions 8 to 71 (FEESIVNIGR…DNAFKNLSKV (64 aa)) constitute an S5 DRBM domain.

The protein belongs to the universal ribosomal protein uS5 family. Part of the 30S ribosomal subunit. Contacts proteins S4 and S8.

With S4 and S12 plays an important role in translational accuracy. In terms of biological role, located at the back of the 30S subunit body where it stabilizes the conformation of the head with respect to the body. The sequence is that of Small ribosomal subunit protein uS5 from Sulfurimonas denitrificans (strain ATCC 33889 / DSM 1251) (Thiomicrospira denitrificans (strain ATCC 33889 / DSM 1251)).